A 247-amino-acid chain; its full sequence is UPF0273 protein PF1931 (247 aa).

The KaiC domain occupies 3-247 (RRVKTGIPGM…VLKRGRIYEL (245 aa)). 30–37 (GGPGTGKS) provides a ligand contact to ATP.

This sequence belongs to the UPF0273 family.

This chain is UPF0273 protein PF1931, found in Pyrococcus furiosus (strain ATCC 43587 / DSM 3638 / JCM 8422 / Vc1).